Consider the following 308-residue polypeptide: Quinolinate synthase (308 aa).

Positions 21 and 38 each coordinate iminosuccinate. Cys83 is a [4Fe-4S] cluster binding site. Iminosuccinate-binding positions include 109–111 and Ser126; that span reads YIN. Residue Cys170 coordinates [4Fe-4S] cluster. Iminosuccinate contacts are provided by residues 196–198 and Thr213; that span reads HPE. Cys263 serves as a coordination point for [4Fe-4S] cluster.

Belongs to the quinolinate synthase family. Type 2 subfamily. It depends on [4Fe-4S] cluster as a cofactor.

It localises to the cytoplasm. It carries out the reaction iminosuccinate + dihydroxyacetone phosphate = quinolinate + phosphate + 2 H2O + H(+). The protein operates within cofactor biosynthesis; NAD(+) biosynthesis; quinolinate from iminoaspartate: step 1/1. Its function is as follows. Catalyzes the condensation of iminoaspartate with dihydroxyacetone phosphate to form quinolinate. The polypeptide is Quinolinate synthase (Sulfurisphaera tokodaii (strain DSM 16993 / JCM 10545 / NBRC 100140 / 7) (Sulfolobus tokodaii)).